The sequence spans 246 residues: Bis(5'-nucleosyl)-tetraphosphatase PrpE [asymmetrical] (246 aa).

The protein belongs to the PrpE family. Ni(2+) serves as cofactor.

It catalyses the reaction P(1),P(4)-bis(5'-guanosyl) tetraphosphate + H2O = GMP + GTP + 2 H(+). Functionally, asymmetrically hydrolyzes Ap4p to yield AMP and ATP. This Bacillus mycoides (strain KBAB4) (Bacillus weihenstephanensis) protein is Bis(5'-nucleosyl)-tetraphosphatase PrpE [asymmetrical].